The primary structure comprises 72 residues: MDYQTDVTEDNVQIRGRARSVEGKKHNGSGLTGVKRHAVSETSQKSQQGTGNGTMTNIAEEQTITVTYNFNF.

Residues 16-58 (GRARSVEGKKHNGSGLTGVKRHAVSETSQKSQQGTGNGTMTNI) form a disordered region. Over residues 40-58 (SETSQKSQQGTGNGTMTNI) the composition is skewed to polar residues.

The protein belongs to the carmovirus/necrovirus/panicovirus movement protein p8 family.

In terms of biological role, cell-to-cell movement. This Tobacco necrosis virus (strain A) (TNV-A) protein is Probable movement protein p8.